A 527-amino-acid polypeptide reads, in one-letter code: Nucleobase-ascorbate transporter LPE1 (527 aa).

12 consecutive transmembrane segments (helical) span residues 43-63 (LVML…MGGG), 68-88 (AIVI…QVHF), 92-112 (LPAV…IILS), 132-152 (LQGA…FGIW), 163-183 (AAVP…FPGV), 189-209 (VGLP…HLFA), 219-239 (AVLV…AAGA), 284-304 (FAML…LIAV), 361-383 (VIKI…AVLA), 387-409 (LPIF…FSLL), 427-447 (LFLG…FGFG), and 458-478 (VMVN…AYLL).

It belongs to the nucleobase:cation symporter-2 (NCS2) (TC 2.A.40) family. In terms of tissue distribution, highly expressed in roots.

The protein resides in the membrane. Its activity is regulated as follows. Inhibited by excess of xanthin, uric acid and ascorbic acid, and by 100 um N,N-dicyclohexylcarbodiimide and 30 um carbonyl cyanide m-chlorophenyl-hydrazone. In terms of biological role, high affinity uric acid-xanthine transporter in A.nidulans. Binds, but cannot transport ascorbic acid. The protein is Nucleobase-ascorbate transporter LPE1 (LPE1) of Zea mays (Maize).